The sequence spans 66 residues: Gallinacin-5 (66 aa).

The signal sequence occupies residues 1–19 (MQILTLLFAVLLLMLRAEP). Residues 20-25 (GLSLAR) constitute a propeptide that is removed on maturation. Disulfide bonds link Cys-31-Cys-59, Cys-38-Cys-53, and Cys-43-Cys-60.

Belongs to the beta-defensin family. Strong expression in the tongue and bone marrow. Low expression in the esophagus, trachea, lung, brain and ovary. Expressed in the ovarian stroma, but not in the ovarian follicles.

It is found in the secreted. The protein resides in the cytoplasmic granule. Functionally, has bactericidal activity. This chain is Gallinacin-5 (GAL5), found in Gallus gallus (Chicken).